The chain runs to 123 residues: uncharacterized protein (123 aa).

The signal sequence occupies residues 1-24 (MLPLCLTFLSFFLSLGGSFKAVMT). 2 consecutive transmembrane segments (helical) span residues 39-59 (FWIF…ALAI) and 101-121 (FGGI…ALTG).

It localises to the membrane. This is an uncharacterized protein from Saccharomyces cerevisiae (strain ATCC 204508 / S288c) (Baker's yeast).